Consider the following 355-residue polypeptide: Oligopeptide transport ATP-binding protein AmiE (355 aa).

An ABC transporter domain is found at 9-260 (LTARDIVVEF…PRHPYTWSLL (252 aa)). ATP is bound at residue 45–52 (GESGSGKS).

Belongs to the ABC transporter superfamily.

The protein localises to the cell membrane. Functionally, part of the binding-protein-dependent transport system for oligopeptides. Probably responsible for energy coupling to the transport system. The sequence is that of Oligopeptide transport ATP-binding protein AmiE (amiE) from Streptococcus pneumoniae serotype 4 (strain ATCC BAA-334 / TIGR4).